Consider the following 79-residue polypeptide: MISFALLLMTGVESVRDAYIAKPENCVYHCATNEGCNKLCTDNGAESGYCQWGGRYGNACWCIKLPDRVPIRVPGKCHR.

A signal peptide spans 1–14; it reads MISFALLLMTGVES. Residues 16-78 form the LCN-type CS-alpha/beta domain; the sequence is RDAYIAKPEN…VPIRVPGKCH (63 aa). Intrachain disulfides connect Cys-26–Cys-77, Cys-30–Cys-50, Cys-36–Cys-60, and Cys-40–Cys-62. Position 79 (Arg-79) is a propeptide, removed by a carboxypeptidase.

This sequence belongs to the long (4 C-C) scorpion toxin superfamily. Sodium channel inhibitor family. Alpha subfamily. Expressed by the venom gland.

It localises to the secreted. Functionally, binds to sodium channels (Nav) and inhibits the inactivation of the activated channels, thereby blocking neuronal transmission. This toxin is active against mammals. The sequence is that of Neurotoxin BmK-M9 from Olivierus martensii (Manchurian scorpion).